We begin with the raw amino-acid sequence, 106 residues long: Probable insulin-like peptide beta-type 1 (106 aa).

The signal sequence occupies residues 1 to 19 (MFSFFTYFLLSALLLSASC). A propeptide spans 20-51 (RQPSMDTSKADRILREIEMETELENQLSRARR) (removed; by convertase egl-3). 4 disulfides stabilise this stretch: Cys-60-Cys-89, Cys-72-Cys-102, Cys-76-Cys-103, and Cys-88-Cys-93.

This sequence belongs to the insulin family. In terms of tissue distribution, expressed by ASI and ASJ sensory neurons and weakly by ventral cord motor neurons.

Its subcellular location is the secreted. Functionally, probable insulin-like peptide which negatively regulates synapse development at the neuromuscular junctions. Probably acts as a daf-2/InsR agonist ligand to prevent dauer formation under optimal environmental conditions. The protein is Probable insulin-like peptide beta-type 1 (ins-4) of Caenorhabditis elegans.